The chain runs to 2474 residues: Serine/threonine-protein kinase TOR2 (2474 aa).

Residues 1-62 form a disordered region; that stretch reads MNKYINKYTT…NGPNDSGRVI (62 aa). Threonine 10 bears the Phosphothreonine mark. Residues 25–36 are compositionally biased toward basic residues; that stretch reads HRTRKKLTHKSH. Residues 43 to 56 are compositionally biased toward polar residues; the sequence is STTSNTDSNHNGPN. 11 HEAT repeats span residues 588–626, 636–674, 676–710, 756–793, 797–835, 841–879, 917–955, 1039–1076, 1079–1116, 1118–1155, and 1292–1331; these read YSLTEFVRLITISYIEHEDSSVRKLAALTSCDLFIKDDI, HSVSEVLSKLLMIAITDPVAEIRLEILQHLGSNFDPQLA, PDNLRLLFMALNDEIFGIQLEAIKIIGRLSSVNPA, PYIDPILDVILPKCQDASSAVASTALKVLGELSVVGGK, RYLKELMPLIINTFQDQSNSFKRDAALTTLGQLAASSGY, LDYPELLGILINILKTENNPHIRRGTVRLIGILGALDPY, YYPTVVIHNLMKILNDPSLSIHHTAAIQAIMHIFQNLGL, RFVPETLTFFLDILENDQSNKRIVPIRILKSLVTFGPN, DYSHLIMPIVVRMTEYSAGSLKKISIITLGRLAKNINL, EMSSRIVQALVRILNNGDRELTKATMNTLSLLLLQLGT, and SYQEDLIQALCKALSSSENPPEIYQMLLNLVEFMEHDDKP. The 585-residue stretch at 1338-1922 folds into the FAT domain; it reads TLGKYAQKCH…VYPLMVAIKS (585 aa). The 325-residue stretch at 2097 to 2421 folds into the PI3K/PI4K catalytic domain; the sequence is FEPVFSVISS…EHKNAIRNAR (325 aa). The G-loop stretch occupies residues 2103-2109; the sequence is VISSKQR. Positions 2276–2284 are catalytic loop; the sequence is GLGDRHPSN. The activation loop stretch occupies residues 2296-2321; sequence HIDFGDCFEAAILREKFPEKVPFRLT. Positions 2442–2474 constitute an FATC domain; sequence NDLDVPEQVDKLIQQATSVENLCQHYIGWCPFW.

Belongs to the PI3/PI4-kinase family. In terms of assembly, the target of rapamycin complex 1 (TORC1) is composed of at least KOG1, LST8, TCO89 and either TOR1 (TORC1-A) or TOR2 (TORC1-B). TORC1 binds to and is inhibited by FKBP-rapamycin. Interacts with PIB2; following activation of PIB2 by glutamine. The target of rapamycin complex 2 (TORC2) is composed of at least AVO1, AVO2, BIT61, LST8, TOR2 and TSC11. TORC2 forms a homodimer. Contrary to TORC1, TORC2 does not bind to and is not sensitive to FKBP-rapamycin. Interacts with SLM1 and SLM2.

It is found in the cell membrane. It localises to the vacuole membrane. It carries out the reaction L-seryl-[protein] + ATP = O-phospho-L-seryl-[protein] + ADP + H(+). The catalysed reaction is L-threonyl-[protein] + ATP = O-phospho-L-threonyl-[protein] + ADP + H(+). It catalyses the reaction a 1,2-diacyl-sn-glycero-3-phospho-(1D-myo-inositol) + ATP = a 1,2-diacyl-sn-glycero-3-phospho-(1D-myo-inositol 4-phosphate) + ADP + H(+). In terms of biological role, phosphatidylinositol 3-kinase homolog, component of both TORC1 and TORC2. TORC1 regulates multiple cellular processes to control cell growth in response to environmental signals. Nutrient limitation and environmental stress signals cause inactivation of TORC1. Active TORC1 positively controls ribosome biogenesis via control of rRNA, ribosomal protein and tRNA gene expression, and rRNA processing. TORC1 positively controls protein biosynthesis by regulation of mRNA stability, translation initiation factor activity, and high-affinity amino acid permeases that serve to provide amino acids for use by the translation machinery. TORC1 also promotes growth by sequestering a number of nutrient and general stress-responsive transcription factors in the cytoplasm. TORC1 negatively controls macroautophagy, a process to recycle surplus cytoplasmic mass under nutrient starvation conditions. TORC1 controls many of these processes via TIP41-TAP42-mediated inhibition of the type 2A-related phosphatases PP2A and SIT4. In nutrient-rich conditions, responsible for the phosphorylation of AGC S6 kinase (S6K) YPK3, activating YPK3 kinase activity and promoting phosphorylation of ribosomal protein S6. Phosphorylates kinase SCH9 at 6 amino acids in the C-terminus, activating SCH9 kinase activity to properly regulate ribosome biogenesis, translation initiation, and entry into stationary phase. TORC2 regulates cell cycle-dependent polarization of the actin-cytoskeleton, cell wall integrity, and receptor endocytosis. TORC2 controls polarity of the actin cytoskeleton, which is required for orienting the secretory pathway toward discrete growth sites, via the RHO1/PKC1/MAPK cell integrity pathway by activating the RHO1 guanine nucleotide exchange factor ROM2. TORC2 phosphorylates the AGC kinase YPK2, an upstream effector of the cell integrity pathway. TORC2 negatively regulates calcineurin-dependent stress signaling via phosphorylation of its effector SLM1-SLM2. This Saccharomyces cerevisiae (strain ATCC 204508 / S288c) (Baker's yeast) protein is Serine/threonine-protein kinase TOR2 (TOR2).